The sequence spans 310 residues: HPr kinase/phosphorylase (310 aa).

Catalysis depends on residues H138 and K159. Position 153–160 (153–160 (GASGIGKS)) interacts with ATP. S160 contacts Mg(2+). The active-site Proton acceptor; for phosphorylation activity. Proton donor; for dephosphorylation activity is D177. An important for the catalytic mechanism of both phosphorylation and dephosphorylation region spans residues 201-210 (IEIRGVGIID). Residue E202 coordinates Mg(2+). R243 is an active-site residue. The interval 264 to 269 (PVKTGR) is important for the catalytic mechanism of dephosphorylation.

The protein belongs to the HPrK/P family. In terms of assembly, homohexamer. Requires Mg(2+) as cofactor.

It carries out the reaction [HPr protein]-L-serine + ATP = [HPr protein]-O-phospho-L-serine + ADP + H(+). It catalyses the reaction [HPr protein]-O-phospho-L-serine + phosphate + H(+) = [HPr protein]-L-serine + diphosphate. Its function is as follows. Catalyzes the ATP- as well as the pyrophosphate-dependent phosphorylation of a specific serine residue in HPr, a phosphocarrier protein of the phosphoenolpyruvate-dependent sugar phosphotransferase system (PTS). HprK/P also catalyzes the pyrophosphate-producing, inorganic phosphate-dependent dephosphorylation (phosphorolysis) of seryl-phosphorylated HPr (P-Ser-HPr). The two antagonistic activities of HprK/P are regulated by several intracellular metabolites, which change their concentration in response to the absence or presence of rapidly metabolisable carbon sources (glucose, fructose, etc.) in the growth medium. Therefore, by controlling the phosphorylation state of HPr, HPrK/P is a sensor enzyme that plays a major role in the regulation of carbon metabolism and sugar transport: it mediates carbon catabolite repression (CCR), and regulates PTS-catalyzed carbohydrate uptake and inducer exclusion. The polypeptide is HPr kinase/phosphorylase (Lactococcus lactis subsp. cremoris (strain SK11)).